The sequence spans 406 residues: Peptidase T (406 aa).

Histidine 78 lines the Zn(2+) pocket. Residue aspartate 80 is part of the active site. Residue aspartate 139 participates in Zn(2+) binding. Residue glutamate 173 is the Proton acceptor of the active site. Glutamate 174, aspartate 196, and histidine 378 together coordinate Zn(2+).

Belongs to the peptidase M20B family. Zn(2+) is required as a cofactor.

It localises to the cytoplasm. It catalyses the reaction Release of the N-terminal residue from a tripeptide.. Functionally, cleaves the N-terminal amino acid of tripeptides. The polypeptide is Peptidase T (Clostridium perfringens (strain 13 / Type A)).